The chain runs to 294 residues: MPNPLQKSLHGYLSKIKKETGKLQLSSSHSFSSSKNWVLGKHPKKLSFSFKHRRRSSKTRFSKEEPVYHQDSAHAATLSDIDRFLEENFKSLCIRDDQEDDQHQARVTKNKEKRESSSDDSDDDDDDDDYRHRFERTWGHAVYDSPKQPPDLLRTERLSPPPGSSEGRPSMETTSTSSERQSRSTLVLPENCIAVLRYTDEPQEDFRQSMVEMMESKLGMRESEVDWDLMEELLFCYLDLNDKKSHKFILSAFVDLIIALREKEKRITRKGHVRSLSTRAARDRLRKRMIMSDN.

Positions 49-60 are enriched in basic residues; the sequence is SFKHRRRSSKTR. Disordered regions lie at residues 49-72, 96-129, and 141-185; these read SFKH…HQDS, DDQE…DDDD, and AVYD…SRST. 2 stretches are compositionally biased toward basic and acidic residues: residues 61-72 and 96-117; these read FSKEEPVYHQDS and DDQE…RESS. The span at 118–128 shows a compositional bias: acidic residues; it reads SDDSDDDDDDD. Residues 164 to 185 show a composition bias toward low complexity; it reads SSEGRPSMETTSTSSERQSRST. The OVATE domain maps to 195–259; the sequence is VLRYTDEPQE…LSAFVDLIIA (65 aa).

As to quaternary structure, interacts with KNAT2 and KNAT3. As to expression, expressed in roots, rosette and cauline leaves, shoots, stems, flower buds and siliques.

The protein resides in the nucleus. In terms of biological role, transcriptional repressor that may regulate multiple aspects of plant growth and development through the regulation of BEL1-LIKE (BLH) and KNOX TALE (KNAT) homeodomain transcription factors. This Arabidopsis thaliana (Mouse-ear cress) protein is Transcription repressor OFP14 (OFP14).